The sequence spans 239 residues: Uridylate kinase (239 aa).

Position 10-13 (10-13) interacts with ATP; it reads KFSG. The segment at 18 to 23 is involved in allosteric activation by GTP; it reads GENGFG. Position 52 (glycine 52) interacts with UMP. ATP is bound by residues glycine 53 and arginine 57. Residues aspartate 73 and 134 to 141 contribute to the UMP site; that span reads TGNPYFTT. The ATP site is built by threonine 161, tyrosine 167, and aspartate 170.

Belongs to the UMP kinase family. In terms of assembly, homohexamer.

It is found in the cytoplasm. The enzyme catalyses UMP + ATP = UDP + ADP. Its pathway is pyrimidine metabolism; CTP biosynthesis via de novo pathway; UDP from UMP (UMPK route): step 1/1. Its activity is regulated as follows. Allosterically activated by GTP. Inhibited by UTP. Catalyzes the reversible phosphorylation of UMP to UDP. The polypeptide is Uridylate kinase (Campylobacter jejuni subsp. doylei (strain ATCC BAA-1458 / RM4099 / 269.97)).